Here is a 132-residue protein sequence, read N- to C-terminus: L-ectoine synthase (132 aa).

Belongs to the ectoine synthase family.

It catalyses the reaction (2S)-4-acetamido-2-aminobutanoate = L-ectoine + H2O. Its pathway is amine and polyamine biosynthesis; ectoine biosynthesis; L-ectoine from L-aspartate 4-semialdehyde: step 3/3. In terms of biological role, catalyzes the circularization of gamma-N-acetyl-alpha,gamma-diaminobutyric acid (ADABA) to ectoine (1,4,5,6-tetrahydro-2-methyl-4-pyrimidine carboxylic acid), which is an excellent osmoprotectant. The polypeptide is L-ectoine synthase (Rhodococcus opacus (strain B4)).